The primary structure comprises 457 residues: Acetylcholine receptor subunit alpha (457 aa).

The N-terminal stretch at Met1 to Gly20 is a signal peptide. Residues Ser21–Leu230 lie on the Extracellular side of the membrane. Disulfide bonds link Cys148/Cys162 and Cys212/Cys213. N-linked (GlcNAc...) asparagine glycosylation is present at Asn161. The next 3 membrane-spanning stretches (helical) occupy residues Pro231–Leu255, Met263–Val281, and Tyr297–Ile316. Topologically, residues Asn317–His428 are cytoplasmic. Residues Ile429 to Ala447 traverse the membrane as a helical segment.

Belongs to the ligand-gated ion channel (TC 1.A.9) family. Acetylcholine receptor (TC 1.A.9.1) subfamily. Alpha-1/CHRNA1 sub-subfamily. In terms of assembly, one of the alpha chains that assemble within the acetylcholine receptor, a pentamer of two alpha chains, a beta, a delta, and a gamma (in immature muscle) or epsilon (in mature muscle) chains. The muscle heteropentamer composed of alpha-1, beta-1, delta, epsilon subunits interacts with the alpha-conotoxin ImII.

Its subcellular location is the postsynaptic cell membrane. It is found in the cell membrane. The enzyme catalyses K(+)(in) = K(+)(out). The catalysed reaction is Na(+)(in) = Na(+)(out). Upon acetylcholine binding, the AChR responds by an extensive change in conformation that affects all subunits and leads to opening of an ion-conducting channel across the plasma membrane. This is Acetylcholine receptor subunit alpha (CHRNA1) from Bos taurus (Bovine).